The primary structure comprises 497 residues: Glycerol kinase (497 aa).

Thr-13 serves as a coordination point for ADP. Thr-13, Thr-14, and Ser-15 together coordinate ATP. Thr-13 is a binding site for sn-glycerol 3-phosphate. Position 17 (Arg-17) interacts with ADP. Arg-83, Glu-84, and Tyr-135 together coordinate sn-glycerol 3-phosphate. Arg-83, Glu-84, and Tyr-135 together coordinate glycerol. Phosphohistidine; by HPr is present on His-231. Asp-245 contributes to the sn-glycerol 3-phosphate binding site. 2 residues coordinate glycerol: Asp-245 and Gln-246. 2 residues coordinate ADP: Thr-267 and Gly-310. Residues Thr-267, Gly-310, Gln-314, and Gly-411 each contribute to the ATP site. ADP contacts are provided by Gly-411 and Asn-415.

This sequence belongs to the FGGY kinase family. In terms of assembly, homotetramer and homodimer (in equilibrium). In terms of processing, the phosphoenolpyruvate-dependent sugar phosphotransferase system (PTS), including enzyme I, and histidine-containing protein (HPr) are required for the phosphorylation, which leads to the activation of the enzyme.

It carries out the reaction glycerol + ATP = sn-glycerol 3-phosphate + ADP + H(+). Its pathway is polyol metabolism; glycerol degradation via glycerol kinase pathway; sn-glycerol 3-phosphate from glycerol: step 1/1. Activated by phosphorylation and inhibited by fructose 1,6-bisphosphate (FBP). Functionally, key enzyme in the regulation of glycerol uptake and metabolism. Catalyzes the phosphorylation of glycerol to yield sn-glycerol 3-phosphate. In Listeria monocytogenes serotype 4a (strain HCC23), this protein is Glycerol kinase.